A 219-amino-acid chain; its full sequence is ATP-dependent Clp protease proteolytic subunit 3 (219 aa).

Catalysis depends on S112, which acts as the Nucleophile. H137 is a catalytic residue.

The protein belongs to the peptidase S14 family. Fourteen ClpP subunits assemble into 2 heptameric rings which stack back to back to give a disk-like structure with a central cavity, resembling the structure of eukaryotic proteasomes.

The protein localises to the cytoplasm. The catalysed reaction is Hydrolysis of proteins to small peptides in the presence of ATP and magnesium. alpha-casein is the usual test substrate. In the absence of ATP, only oligopeptides shorter than five residues are hydrolyzed (such as succinyl-Leu-Tyr-|-NHMec, and Leu-Tyr-Leu-|-Tyr-Trp, in which cleavage of the -Tyr-|-Leu- and -Tyr-|-Trp bonds also occurs).. Its function is as follows. Cleaves peptides in various proteins in a process that requires ATP hydrolysis. Has a chymotrypsin-like activity. Plays a major role in the degradation of misfolded proteins. The polypeptide is ATP-dependent Clp protease proteolytic subunit 3 (Streptomyces avermitilis (strain ATCC 31267 / DSM 46492 / JCM 5070 / NBRC 14893 / NCIMB 12804 / NRRL 8165 / MA-4680)).